Here is a 242-residue protein sequence, read N- to C-terminus: ATP synthase subunit a (242 aa).

Transmembrane regions (helical) follow at residues 29–49, 84–104, 114–134, 140–160, 181–201, and 206–226; these read SAVA…TAFV, FFPL…LGMV, IIVT…YGIY, FFSL…MVII, VAGH…TWLF, and IALV…QAYI.

Belongs to the ATPase A chain family. As to quaternary structure, F-type ATPases have 2 components, CF(1) - the catalytic core - and CF(0) - the membrane proton channel. CF(1) has five subunits: alpha(3), beta(3), gamma(1), delta(1), epsilon(1). CF(0) has three main subunits: a(1), b(2) and c(9-12). The alpha and beta chains form an alternating ring which encloses part of the gamma chain. CF(1) is attached to CF(0) by a central stalk formed by the gamma and epsilon chains, while a peripheral stalk is formed by the delta and b chains.

The protein resides in the cell inner membrane. Its function is as follows. Key component of the proton channel; it plays a direct role in the translocation of protons across the membrane. The protein is ATP synthase subunit a of Orientia tsutsugamushi (strain Ikeda) (Rickettsia tsutsugamushi).